The following is a 93-amino-acid chain: Small ribosomal subunit protein uS19 (93 aa).

It belongs to the universal ribosomal protein uS19 family.

Functionally, protein S19 forms a complex with S13 that binds strongly to the 16S ribosomal RNA. This is Small ribosomal subunit protein uS19 from Clostridium acetobutylicum (strain ATCC 824 / DSM 792 / JCM 1419 / IAM 19013 / LMG 5710 / NBRC 13948 / NRRL B-527 / VKM B-1787 / 2291 / W).